A 758-amino-acid chain; its full sequence is 5-methyltetrahydropteroyltriglutamate--homocysteine methyltransferase (758 aa).

Residues 16–19 (RELK) and K116 each bind 5-methyltetrahydropteroyltri-L-glutamate. Residues 436–438 (IGS) and E489 each bind L-homocysteine. L-methionine is bound by residues 436-438 (IGS) and E489. 5-methyltetrahydropteroyltri-L-glutamate contacts are provided by residues 520–521 (RC) and W566. D604 is a binding site for L-homocysteine. Residue D604 coordinates L-methionine. Position 610 (E610) interacts with 5-methyltetrahydropteroyltri-L-glutamate. Zn(2+) contacts are provided by H646, C648, and E670. H699 acts as the Proton donor in catalysis. Position 731 (C731) interacts with Zn(2+).

This sequence belongs to the vitamin-B12 independent methionine synthase family. Zn(2+) is required as a cofactor.

It catalyses the reaction 5-methyltetrahydropteroyltri-L-glutamate + L-homocysteine = tetrahydropteroyltri-L-glutamate + L-methionine. It participates in amino-acid biosynthesis; L-methionine biosynthesis via de novo pathway; L-methionine from L-homocysteine (MetE route): step 1/1. Catalyzes the transfer of a methyl group from 5-methyltetrahydrofolate to homocysteine resulting in methionine formation. The protein is 5-methyltetrahydropteroyltriglutamate--homocysteine methyltransferase of Nitrosococcus oceani (strain ATCC 19707 / BCRC 17464 / JCM 30415 / NCIMB 11848 / C-107).